The chain runs to 91 residues: YcgL domain-containing protein ESA_01460 (91 aa).

The YcgL domain maps to 1 to 85; it reads MFCVIYRSAR…PPENLLKQHL (85 aa).

The sequence is that of YcgL domain-containing protein ESA_01460 from Cronobacter sakazakii (strain ATCC BAA-894) (Enterobacter sakazakii).